The following is a 498-amino-acid chain: Glycerol kinase (498 aa).

Thr14 is an ADP binding site. The ATP site is built by Thr14, Thr15, and Ser16. Thr14 contributes to the sn-glycerol 3-phosphate binding site. Position 18 (Arg18) interacts with ADP. The sn-glycerol 3-phosphate site is built by Arg84, Glu85, Tyr136, and Asp243. Glycerol is bound by residues Arg84, Glu85, Tyr136, Asp243, and Gln244. 2 residues coordinate ADP: Thr265 and Gly308. Positions 265, 308, 312, and 409 each coordinate ATP. 2 residues coordinate ADP: Gly409 and Asn413.

Belongs to the FGGY kinase family.

It catalyses the reaction glycerol + ATP = sn-glycerol 3-phosphate + ADP + H(+). It participates in polyol metabolism; glycerol degradation via glycerol kinase pathway; sn-glycerol 3-phosphate from glycerol: step 1/1. Inhibited by fructose 1,6-bisphosphate (FBP). Functionally, key enzyme in the regulation of glycerol uptake and metabolism. Catalyzes the phosphorylation of glycerol to yield sn-glycerol 3-phosphate. In Shewanella frigidimarina (strain NCIMB 400), this protein is Glycerol kinase.